The primary structure comprises 84 residues: Large ribosomal subunit protein bL27 (84 aa).

Residues 1–20 (MAHKKSGGASRNGRDSNPKY) form a disordered region.

The protein belongs to the bacterial ribosomal protein bL27 family.

In Dictyoglomus thermophilum (strain ATCC 35947 / DSM 3960 / H-6-12), this protein is Large ribosomal subunit protein bL27.